We begin with the raw amino-acid sequence, 249 residues long: Probable transcriptional regulatory protein Tfu_2096 (249 aa).

It belongs to the TACO1 family.

It localises to the cytoplasm. The polypeptide is Probable transcriptional regulatory protein Tfu_2096 (Thermobifida fusca (strain YX)).